A 288-amino-acid polypeptide reads, in one-letter code: Bifunctional protein FolD (288 aa).

NADP(+) is bound by residues G166–S168 and I232.

The protein belongs to the tetrahydrofolate dehydrogenase/cyclohydrolase family. As to quaternary structure, homodimer.

It catalyses the reaction (6R)-5,10-methylene-5,6,7,8-tetrahydrofolate + NADP(+) = (6R)-5,10-methenyltetrahydrofolate + NADPH. The enzyme catalyses (6R)-5,10-methenyltetrahydrofolate + H2O = (6R)-10-formyltetrahydrofolate + H(+). It participates in one-carbon metabolism; tetrahydrofolate interconversion. In terms of biological role, catalyzes the oxidation of 5,10-methylenetetrahydrofolate to 5,10-methenyltetrahydrofolate and then the hydrolysis of 5,10-methenyltetrahydrofolate to 10-formyltetrahydrofolate. This Yersinia pseudotuberculosis serotype O:1b (strain IP 31758) protein is Bifunctional protein FolD.